We begin with the raw amino-acid sequence, 236 residues long: Glycoprotein U23 (236 aa).

Residues 1–17 form the signal peptide; the sequence is MLFLSFLLVCLCEEVRM. Asn67, Asn80, and Asn103 each carry an N-linked (GlcNAc...) asparagine; by host glycan. Residues 184–204 form a helical membrane-spanning segment; sequence LVIWIGGISFIGAFVILIVIL.

Its subcellular location is the membrane. This is Glycoprotein U23 (U23) from Human herpesvirus 6A (strain Uganda-1102) (HHV-6 variant A).